The chain runs to 311 residues: Putative mitochondrial transporter UCP3 (311 aa).

At 1–10 (MVGLQPSERP) the chain is on the mitochondrial intermembrane side. Residues 11-32 (PTTSVKFLAAGTAACFADLLTF) form a helical membrane-spanning segment. 3 Solcar repeats span residues 11 to 105 (PTTS…VKQF), 114 to 205 (SSII…IKEK), and 214 to 299 (DNFP…MKRA). Over 33–76 (PLDTAKVRLQIQGENQAALAARSAQYRGVLGTILTMVRTEGPRS) the chain is Mitochondrial matrix. Residues 77 to 99 (LYSGLVAGLQRQMSFASIRIGLY) form a helical membrane-spanning segment. Over 100 to 119 (DSVKQFYTPKGSDHSSIITR) the chain is Mitochondrial intermembrane. Residues 120-136 (ILAGCTTGAMAVTCAQP) traverse the membrane as a helical segment. The Mitochondrial matrix portion of the chain corresponds to 137–182 (TDVVKIRFQASMHTGLGGNRKYSGTMDAYRTIAREEGVRGLWKGIL). A helical transmembrane segment spans residues 183-199 (PNITRNAIVNCGEMVTY). Residues 200–216 (DIIKEKLLDYHLLTDNF) lie on the Mitochondrial intermembrane side of the membrane. Residues 217–236 (PCHFVSAFGAGFCATLVASP) traverse the membrane as a helical segment. Residues 237 to 270 (VDVVKTRYMNSPPGQYHSPFDCMLKMVTQEGPTA) are Mitochondrial matrix-facing. A helical membrane pass occupies residues 271-293 (FYKGFTPSFLRLGSWNVVMFVTY). Residues 278–300 (SFLRLGSWNVVMFVTYEQMKRAL) are purine nucleotide binding. Over 294–311 (EQMKRALMKVQMLRDSPF) the chain is Mitochondrial intermembrane.

Belongs to the mitochondrial carrier (TC 2.A.29) family. As to quaternary structure, interacts with HAX1; the interaction is direct and calcium-dependent.

It localises to the mitochondrion inner membrane. Putative transmembrane transporter that plays a role in mitochondrial metabolism via an as yet unclear mechanism. Originally, this mitochondrial protein was thought to act as a proton transmembrane transporter from the mitochondrial intermembrane space into the matrix, causing proton leaks through the inner mitochondrial membrane, thereby uncoupling mitochondrial membrane potential generation from ATP synthesis. However, this function is controversial and uncoupling may not be the function, or at least not the main function, but rather a consequence of more conventional metabolite transporter activity. The protein is Putative mitochondrial transporter UCP3 of Bos taurus (Bovine).